The following is a 164-amino-acid chain: FMN reductase (NADH) RutF (164 aa).

It belongs to the non-flavoprotein flavin reductase family. RutF subfamily.

It catalyses the reaction FMNH2 + NAD(+) = FMN + NADH + 2 H(+). Catalyzes the reduction of FMN to FMNH2 which is used to reduce pyrimidine by RutA via the Rut pathway. The protein is FMN reductase (NADH) RutF of Escherichia coli O6:K15:H31 (strain 536 / UPEC).